Reading from the N-terminus, the 228-residue chain is L-ribulose-5-phosphate 4-epimerase UlaF (228 aa).

Residues 26-27, 43-44, and 72-73 each bind substrate; these read GN, SG, and SS. The Zn(2+) site is built by Asp-74, His-93, and His-95. The Proton donor/acceptor role is filled by Asp-118. His-167 serves as a coordination point for Zn(2+). The active-site Proton donor/acceptor is Tyr-225.

It belongs to the aldolase class II family. AraD/FucA subfamily. The cofactor is Zn(2+).

The catalysed reaction is L-ribulose 5-phosphate = D-xylulose 5-phosphate. It functions in the pathway cofactor degradation; L-ascorbate degradation; D-xylulose 5-phosphate from L-ascorbate: step 4/4. In terms of biological role, catalyzes the isomerization of L-ribulose 5-phosphate to D-xylulose 5-phosphate. Is involved in the anaerobic L-ascorbate utilization. The chain is L-ribulose-5-phosphate 4-epimerase UlaF from Escherichia coli (strain K12 / MC4100 / BW2952).